The primary structure comprises 954 residues: Endogenous retrovirus group K member 25 Pol protein (954 aa).

The 189-residue stretch at 57–245 folds into the Reverse transcriptase domain; that stretch reads LEKGHIEPSF…TPFHYLGMQI (189 aa). Positions 161-164 match the LPQG motif; the sequence is LPQG. The YXDD signature appears at 195-198; the sequence is YIDD. In terms of domain architecture, RNase H type-1 spans 460–588; it reads LENALTVFTD…ADLLVSSALI (129 aa). Mg(2+) is bound by residues D469, E497, D515, and D580. Residues 585-626 form an Integrase-type zinc finger; it reads SALIKAQELHALTHVNAAGLKNKFDVTWKLAKDIVQHCTQCQ. 4 residues coordinate Zn(2+): H594, H598, C622, and C625. In terms of domain architecture, Integrase catalytic spans 640 to 801; it reads RGLCPNALWQ…TSAEQHLTGK (162 aa). The segment at residues 809–857 is a DNA-binding region (integrase-type); it reads KLIWWKDNKNKTWEIGKVITWGRGFACVSPGENQLPVWIPTRHLKFYNE. Residues 862–888 form a disordered region; the sequence is AKKSTSAETETPQSSTVDSQDEQNGDV. Positions 867-879 are enriched in polar residues; it reads SAETETPQSSTVD.

The protein belongs to the beta type-B retroviral polymerase family. HERV class-II K(HML-2) pol subfamily.

The catalysed reaction is DNA(n) + a 2'-deoxyribonucleoside 5'-triphosphate = DNA(n+1) + diphosphate. It carries out the reaction Endonucleolytic cleavage to 5'-phosphomonoester.. In terms of biological role, early post-infection, the reverse transcriptase converts the viral RNA genome into double-stranded viral DNA. The RNase H domain of the reverse transcriptase performs two functions. It degrades the RNA template and specifically removes the RNA primer from the RNA/DNA hybrid. Following nuclear import, the integrase catalyzes the insertion of the linear, double-stranded viral DNA into the host cell chromosome. Endogenous Pol proteins may have kept, lost or modified their original function during evolution. The sequence is that of Endogenous retrovirus group K member 25 Pol protein (ERVK-25) from Homo sapiens (Human).